The chain runs to 165 residues: C-phycoerythrin class 2 subunit alpha (165 aa).

The phycourobilin site is built by cysteine 75, cysteine 83, and cysteine 140.

The protein belongs to the phycobiliprotein family. In terms of assembly, heterodimer of an alpha and a beta chain. In terms of processing, contains three covalently linked phycourobilin chromophores.

It localises to the cellular thylakoid membrane. Light-harvesting photosynthetic bile pigment-protein from the phycobiliprotein complex. The polypeptide is C-phycoerythrin class 2 subunit alpha (mpeA) (Synechococcus sp. (strain WH8103)).